The sequence spans 433 residues: uncharacterized protein (433 aa).

It belongs to the arrestin family.

This is an uncharacterized protein from Schizosaccharomyces pombe (strain 972 / ATCC 24843) (Fission yeast).